The chain runs to 132 residues: Small ribosomal subunit protein uS9 (132 aa).

Residues 100–132 form a disordered region; the sequence is LKSNGLLTRDDRTKERKKPGLKRARKAPQYTKR. The span at 114–132 shows a compositional bias: basic residues; the sequence is ERKKPGLKRARKAPQYTKR.

Belongs to the universal ribosomal protein uS9 family.

The polypeptide is Small ribosomal subunit protein uS9 (Dehalococcoides mccartyi (strain ATCC BAA-2266 / KCTC 15142 / 195) (Dehalococcoides ethenogenes (strain 195))).